Consider the following 498-residue polypeptide: Aldehyde dehydrogenase, mitochondrial (498 aa).

The N-terminal 9 residues, 1 to 9, are a transit peptide targeting the mitochondrion; it reads MLRATLARL. 242–247 contributes to the NAD(+) binding site; it reads GSTAVG. Glutamate 265 (proton acceptor) is an active-site residue. Residue cysteine 299 is the Nucleophile of the active site.

The protein belongs to the aldehyde dehydrogenase family.

It localises to the mitochondrion. It carries out the reaction an aldehyde + NAD(+) + H2O = a carboxylate + NADH + 2 H(+). It participates in alcohol metabolism; ethanol degradation; acetate from ethanol: step 2/2. Functionally, could have an RNA-binding activity in addition of its catalytic role. The sequence is that of Aldehyde dehydrogenase, mitochondrial (ALDH2) from Leishmania tarentolae (Sauroleishmania tarentolae).